The primary structure comprises 258 residues: Thrombin-like enzyme saxthrombin (258 aa).

An N-terminal signal peptide occupies residues 1–18; that stretch reads MVLIRVLANLLILQLSYA. Residues 19 to 24 constitute a propeptide that is removed on maturation; it reads QKSSEL. A Peptidase S1 domain is found at 25–249; the sequence is VIGGDECNIN…YNHWIQSIIA (225 aa). 6 disulfides stabilise this stretch: cysteine 31–cysteine 163, cysteine 50–cysteine 66, cysteine 98–cysteine 256, cysteine 142–cysteine 210, cysteine 174–cysteine 189, and cysteine 200–cysteine 225. N-linked (GlcNAc...) asparagine glycosylation is present at asparagine 44. Active-site charge relay system residues include histidine 65 and aspartate 110. Serine 204 functions as the Charge relay system in the catalytic mechanism. Residue asparagine 251 is glycosylated (N-linked (GlcNAc...) asparagine).

This sequence belongs to the peptidase S1 family. Snake venom subfamily. Monomer. As to expression, expressed by the venom gland.

Its subcellular location is the secreted. Its function is as follows. Thrombin-like snake venom serine protease that shows strong blood coagulation activity in vitro. The sequence is that of Thrombin-like enzyme saxthrombin from Gloydius intermedius (Central Asian pit viper).